A 762-amino-acid chain; its full sequence is Xaa-Pro dipeptidyl-peptidase (762 aa).

Residues serine 349, aspartate 469, and histidine 499 each act as charge relay system in the active site.

This sequence belongs to the peptidase S15 family. Homodimer.

The protein localises to the cytoplasm. It catalyses the reaction Hydrolyzes Xaa-Pro-|- bonds to release unblocked, N-terminal dipeptides from substrates including Ala-Pro-|-p-nitroanilide and (sequentially) Tyr-Pro-|-Phe-Pro-|-Gly-Pro-|-Ile.. Its function is as follows. Removes N-terminal dipeptides sequentially from polypeptides having unsubstituted N-termini provided that the penultimate residue is proline. The polypeptide is Xaa-Pro dipeptidyl-peptidase (Streptococcus sanguinis (strain SK36)).